Here is a 277-residue protein sequence, read N- to C-terminus: Hydroxyethylthiazole kinase (277 aa).

A substrate-binding site is contributed by Met-56. Arg-131 and Thr-177 together coordinate ATP. A substrate-binding site is contributed by Ala-204.

It belongs to the Thz kinase family. Mg(2+) is required as a cofactor.

The catalysed reaction is 5-(2-hydroxyethyl)-4-methylthiazole + ATP = 4-methyl-5-(2-phosphooxyethyl)-thiazole + ADP + H(+). It participates in cofactor biosynthesis; thiamine diphosphate biosynthesis; 4-methyl-5-(2-phosphoethyl)-thiazole from 5-(2-hydroxyethyl)-4-methylthiazole: step 1/1. Functionally, catalyzes the phosphorylation of the hydroxyl group of 4-methyl-5-beta-hydroxyethylthiazole (THZ). The polypeptide is Hydroxyethylthiazole kinase (Gemmatimonas aurantiaca (strain DSM 14586 / JCM 11422 / NBRC 100505 / T-27)).